Consider the following 75-residue polypeptide: Large ribosomal subunit protein uL29 (75 aa).

This sequence belongs to the universal ribosomal protein uL29 family.

The chain is Large ribosomal subunit protein uL29 from Ureaplasma urealyticum serovar 10 (strain ATCC 33699 / Western).